Reading from the N-terminus, the 476-residue chain is MKRVLVLLLALAFGHALERGRDYEKDKVCQELSTLGKDDFRSLSLILYSRKFPSSTFEQVSQLVKEVVSLTEECCAEGADPNCYDTRTSELSIKSCESDAPFPVHPGTSECCTKEGLERKLCMAALSHQPQEFPAYVEPTNDEICEAFRKDPKGFADQFLFEYSSNYGQAPLPLLVGYTKSYLSMVGSCCTSAKPTVCFLKERLQMKQLLLLTTMSNRVCSQYAAYGKEKSRMSHLIKLAQKVPTANLEDVLPLAEDLTEILSRCCKSTSEDCMARELPEHTLKICGNLSKKNSKFEECCYETTPMGIFMCSYFMPTAEPLQLPAIKLPTSKDLCGQSATQAMDQYTFELSRRTQVPEVFLSKVLDTTLKTLRECCDTQDSVSCFSTQSPLMKRQLTSFIEKGQEMCADYSENTFTEYKKKLAERLRTKMPNASPEELADMVAKHSDFASKCCSINSPPRYCSSQIDAEMRDILQS.

A signal peptide spans 1–16; the sequence is MKRVLVLLLALAFGHA. 3 Albumin domains span residues 17–208, 209–394, and 395–476; these read LERG…QMKQ, LLLL…LMKR, and QLTS…ILQS. Cystine bridges form between cysteine 29/cysteine 75, cysteine 74/cysteine 83, cysteine 96/cysteine 112, cysteine 111/cysteine 122, cysteine 145/cysteine 190, cysteine 189/cysteine 198, cysteine 220/cysteine 266, cysteine 265/cysteine 273, cysteine 286/cysteine 300, cysteine 299/cysteine 311, cysteine 335/cysteine 376, cysteine 375/cysteine 384, cysteine 407/cysteine 453, and cysteine 452/cysteine 462. Asparagine 288 carries an N-linked (GlcNAc...) asparagine glycan. A Phosphoserine modification is found at serine 434.

Belongs to the ALB/AFP/VDB family. Associates with membrane-bound immunoglobulin on the surface of B-lymphocytes and with IgG Fc receptor on the membranes of T-lymphocytes. Interacts with LRP2; the interaction is required for renal uptake of GC in complex with 25-hydroxyvitamin D3.

It is found in the secreted. Functionally, involved in vitamin D transport and storage, scavenging of extracellular G-actin, enhancement of the chemotactic activity of C5 alpha for neutrophils in inflammation and macrophage activation. The sequence is that of Vitamin D-binding protein (Gc) from Rattus norvegicus (Rat).